The following is a 434-amino-acid chain: Pre-mRNA-splicing factor PRP46 (434 aa).

WD repeat units follow at residues 120 to 160, 163 to 202, 205 to 244, 247 to 288, 290 to 329, 331 to 369, and 380 to 419; these read GHTG…LKIT, GHVM…AIRD, GHLS…EIMV, GHKS…KVLT, HSRN…TNFQ, QNTG…KYQS, and ESER…TEDT.

This sequence belongs to the WD repeat PRL1/PRL2 family. In terms of assembly, associated with the spliceosome.

Its subcellular location is the cytoplasm. It localises to the nucleus. Its function is as follows. Involved in pre-mRNA splicing and required for cell cycle progression at G2/M. This is Pre-mRNA-splicing factor PRP46 (PRP46) from Kluyveromyces lactis (strain ATCC 8585 / CBS 2359 / DSM 70799 / NBRC 1267 / NRRL Y-1140 / WM37) (Yeast).